The following is a 237-amino-acid chain: 2,3-bisphosphoglycerate-dependent phosphoglycerate mutase (237 aa).

Substrate contacts are provided by residues 8–15 (RHGQSAWN), 21–22 (TG), Arg60, 87–90 (ERHY), Lys98, 114–115 (RR), and 180–181 (GN). The active-site Tele-phosphohistidine intermediate is the His9. Glu87 functions as the Proton donor/acceptor in the catalytic mechanism.

Belongs to the phosphoglycerate mutase family. BPG-dependent PGAM subfamily. As to quaternary structure, homodimer.

It carries out the reaction (2R)-2-phosphoglycerate = (2R)-3-phosphoglycerate. Its pathway is carbohydrate degradation; glycolysis; pyruvate from D-glyceraldehyde 3-phosphate: step 3/5. Its function is as follows. Catalyzes the interconversion of 2-phosphoglycerate and 3-phosphoglycerate. In Hyphomonas neptunium (strain ATCC 15444), this protein is 2,3-bisphosphoglycerate-dependent phosphoglycerate mutase.